The following is a 598-amino-acid chain: Arylsulfatase J (598 aa).

The first 47 residues, 1-47, serve as a signal peptide directing secretion; the sequence is MAPRDSAEPLPPLSPQAWAWSGKFLAMGALAGFSVLSLLTYGYLCWG. 3 residues coordinate Ca(2+): D82, D83, and C120. Residue C120 is the Nucleophile of the active site. C120 bears the 3-oxoalanine (Cys) mark. Residue N155 is glycosylated (N-linked (GlcNAc...) asparagine). K174 is a substrate binding site. Residue H176 is part of the active site. H267 contributes to the substrate binding site. N-linked (GlcNAc...) asparagine glycosylation is found at N304 and N316. Residues D325 and N326 each contribute to the Ca(2+) site. Substrate is bound at residue K343. Residues N429, N495, N525, and N563 are each glycosylated (N-linked (GlcNAc...) asparagine). Positions 532 to 598 are disordered; the sequence is RYPPKDPRSN…IKCHPSVATG (67 aa). Positions 559–583 are enriched in basic residues; sequence KKKSNKTKAKKMQKKKSKARMRKQL.

It belongs to the sulfatase family. Ca(2+) serves as cofactor. In terms of processing, the conversion to 3-oxoalanine (also known as C-formylglycine, FGly), of a serine or cysteine residue in prokaryotes and of a cysteine residue in eukaryotes, is critical for catalytic activity.

The protein resides in the secreted. This chain is Arylsulfatase J (Arsj), found in Mus musculus (Mouse).